Here is a 547-residue protein sequence, read N- to C-terminus: Pyochelin synthase PchD (547 aa).

Belongs to the ATP-dependent AMP-binding enzyme family.

The enzyme catalyses salicylate + holo-[ACP] + ATP = salicyl-[ACP] + AMP + diphosphate. Its pathway is siderophore biosynthesis. It participates in antifungal biosynthesis. Its function is as follows. Involved in the biosynthesis of the siderophore pyochelin. Specifically adenylates salicylate and loads it onto the holo form of PchE via a thioester linkage to the phosphopanthetheine moiety. Is also involved in the synthesis of the antifungal antibiotic dihydroaeruginoic acid (Dha or hydroxyphenyl-thiazolinyl-carboxylate), a precursor of pyochelin. The sequence is that of Pyochelin synthase PchD from Pseudomonas aeruginosa (strain UCBPP-PA14).